The primary structure comprises 464 residues: MSIMRNFLSMIIMLCVCLNWCFAEGAEKSDSGKVLDSYTIQVSSLFPSSSSCVPSSKASNTKSSLRVVHMHGACSHLSSDARVDHDEIIRRDQARVESIYSKLSKNSANEVSEAKSTELPAKSGITLGSGNYIVTIGIGTPKHDLSLVFDTGSDLTWTQCEPCLGSCYSQKEPKFNPSSSSTYQNVSCSSPMCEDAESCSASNCVYSIVYGDKSFTQGFLAKEKFTLTNSDVLEDVYFGCGENNQGLFDGVAGLLGLGPGKLSLPAQTTTTYNNIFSYCLPSFTSNSTGHLTFGSAGISESVKFTPISSFPSAFNYGIDIIGISVGDKELAITPNSFSTEGAIIDSGTVFTRLPTKVYAELRSVFKEKMSSYKSTSGYGLFDTCYDFTGLDTVTYPTIAFSFAGSTVVELDGSGISLPIKISQVCLAFAGNDDLPAIFGNVQQTTLDVVYDVAGGRVGFAPNGC.

The first 25 residues, 1–25, serve as a signal peptide directing secretion; the sequence is MSIMRNFLSMIIMLCVCLNWCFAEG. The Peptidase A1 domain maps to 132-460; it reads YIVTIGIGTP…DVAGGRVGFA (329 aa). Catalysis depends on residues Asp-150 and Asp-345. Cysteines 384 and 425 form a disulfide.

Belongs to the peptidase A1 family.

Its subcellular location is the secreted. It is found in the extracellular space. It localises to the apoplast. Its function is as follows. Aspartyl protease involved in a homeostatic feedback mechanism regulating systemic immunity. Has only mild or no influence on local defenses. Acts downstream of salicylic acid to suppress systemic immunity. This is Aspartyl protease AED1 from Arabidopsis thaliana (Mouse-ear cress).